Consider the following 208-residue polypeptide: Orotidine 5'-phosphate decarboxylase (208 aa).

Substrate contacts are provided by residues Asp7, Lys29, 57–66, Ser109, 162–172, Gly185, and Arg186; these read DLKLADIPNT and PGIGAQGGKAK. Lys59 functions as the Proton donor in the catalytic mechanism.

It belongs to the OMP decarboxylase family. Type 1 subfamily. As to quaternary structure, homodimer.

It catalyses the reaction orotidine 5'-phosphate + H(+) = UMP + CO2. It functions in the pathway pyrimidine metabolism; UMP biosynthesis via de novo pathway; UMP from orotate: step 2/2. Catalyzes the decarboxylation of orotidine 5'-monophosphate (OMP) to uridine 5'-monophosphate (UMP). This is Orotidine 5'-phosphate decarboxylase from Pyrococcus abyssi (strain GE5 / Orsay).